The chain runs to 250 residues: Methylthioribulose-1-phosphate dehydratase (250 aa).

Cys-103 provides a ligand contact to substrate. Zn(2+) contacts are provided by His-121 and His-123. The Proton donor/acceptor role is filled by Glu-146. His-211 is a binding site for Zn(2+).

It belongs to the aldolase class II family. MtnB subfamily. Zn(2+) is required as a cofactor.

It localises to the cytoplasm. The enzyme catalyses 5-(methylsulfanyl)-D-ribulose 1-phosphate = 5-methylsulfanyl-2,3-dioxopentyl phosphate + H2O. The protein operates within amino-acid biosynthesis; L-methionine biosynthesis via salvage pathway; L-methionine from S-methyl-5-thio-alpha-D-ribose 1-phosphate: step 2/6. Its function is as follows. Catalyzes the dehydration of methylthioribulose-1-phosphate (MTRu-1-P) into 2,3-diketo-5-methylthiopentyl-1-phosphate (DK-MTP-1-P). The protein is Methylthioribulose-1-phosphate dehydratase of Clavispora lusitaniae (strain ATCC 42720) (Yeast).